Here is a 182-residue protein sequence, read N- to C-terminus: Plasmolipin (182 aa).

Residues 1–35 (MAEFPSKVSTRTSSPAQGAEASVSALRPDLGFVRS) lie on the Cytoplasmic side of the membrane. Position 9 is a phosphoserine (serine 9). An MARVEL domain is found at 32–166 (FVRSRLGALM…SAFFSYQAWR (135 aa)). Residues 36–56 (RLGALMLLQLVLGLLVWALIA) traverse the membrane as a helical segment. The Extracellular segment spans residues 57–68 (DTPYHLYPAYGW). The helical transmembrane segment at 69–89 (VMFVAVFLWLVTIVLFNLYLF) threads the bilayer. Topologically, residues 90–99 (QLHMKLYMVP) are cytoplasmic. Residues 100–120 (WPLVLMIFNISATVLYITAFI) form a helical membrane-spanning segment. Over 121-141 (ACSAAVDLTSLRGTRPYNQRA) the chain is Extracellular. Residues 142-162 (AASFFACLVMIAYGVSAFFSY) traverse the membrane as a helical segment. Over 163–182 (QAWRGVGSNAATSQMAGGYA) the chain is Cytoplasmic.

This sequence belongs to the MAL family. As to quaternary structure, forms oligomers. Phosphorylated.

The protein localises to the cell membrane. Its subcellular location is the myelin membrane. It localises to the apical cell membrane. The protein resides in the golgi apparatus. In terms of biological role, main component of the myelin sheath that plays an important role in myelin membrane biogenesis and myelination. Plays an essential function in apical endocytosis. Regulates epithelial development through the regulation of apical endocytosis. Part of the intracellular machinery that mediates basolateral-to-apical transport of ICAM-1, an essential adhesion receptor in epithelial cells, from the subapical compartment in hepatic epithelial cells. The polypeptide is Plasmolipin (Homo sapiens (Human)).